The sequence spans 108 residues: Putative pterin-4-alpha-carbinolamine dehydratase (108 aa).

The protein belongs to the pterin-4-alpha-carbinolamine dehydratase family.

It catalyses the reaction (4aS,6R)-4a-hydroxy-L-erythro-5,6,7,8-tetrahydrobiopterin = (6R)-L-erythro-6,7-dihydrobiopterin + H2O. This chain is Putative pterin-4-alpha-carbinolamine dehydratase, found in Bordetella avium (strain 197N).